A 318-amino-acid polypeptide reads, in one-letter code: MGFYHVGQAAFELLTSSFILVGFSDRPHLELIVFVVVLIFYLLTLLGNMTIVLLSALDSRLHTPMYFFLANLSFLDMCFTTGSIPQMLYNLWGPDKTISYVGCAIQLYFVLALGGVECVLLAVMAYDRYAAVCKPLHYTIIMHPRLCGQLASVAWLSGFGNSLIMAPQTLMLPRCGHRRVDHFLCEMPALIGMACVDTMMLEALAFALAIFIILAPLILILISYGYVGGTVLRIKSAAGRKKAFNTCSSHLIVVSLFYGTIIYMYLQPANTYSQDQGKFLTLFYTIVTPSVNPLIYTLRNKDVKEAMKKVLGKGSAEI.

Residues 1–31 (MGFYHVGQAAFELLTSSFILVGFSDRPHLEL) lie on the Extracellular side of the membrane. A helical transmembrane segment spans residues 32–52 (IVFVVVLIFYLLTLLGNMTIV). Residues 53–63 (LLSALDSRLHT) lie on the Cytoplasmic side of the membrane. The helical transmembrane segment at 64–84 (PMYFFLANLSFLDMCFTTGSI) threads the bilayer. Residues 85–103 (PQMLYNLWGPDKTISYVGC) lie on the Extracellular side of the membrane. Cysteines 103 and 185 form a disulfide. The chain crosses the membrane as a helical span at residues 104–124 (AIQLYFVLALGGVECVLLAVM). Residues 125–145 (AYDRYAAVCKPLHYTIIMHPR) lie on the Cytoplasmic side of the membrane. Residues 146–166 (LCGQLASVAWLSGFGNSLIMA) traverse the membrane as a helical segment. Over 167-202 (PQTLMLPRCGHRRVDHFLCEMPALIGMACVDTMMLE) the chain is Extracellular. The helical transmembrane segment at 203–223 (ALAFALAIFIILAPLILILIS) threads the bilayer. At 224–245 (YGYVGGTVLRIKSAAGRKKAFN) the chain is on the cytoplasmic side. Residues 246 to 266 (TCSSHLIVVSLFYGTIIYMYL) traverse the membrane as a helical segment. Residues 267–277 (QPANTYSQDQG) lie on the Extracellular side of the membrane. A helical membrane pass occupies residues 278–298 (KFLTLFYTIVTPSVNPLIYTL). Topologically, residues 299 to 318 (RNKDVKEAMKKVLGKGSAEI) are cytoplasmic.

The protein belongs to the G-protein coupled receptor 1 family.

The protein resides in the cell membrane. Functionally, odorant receptor. The sequence is that of Putative olfactory receptor 2W6 (OR2W6P) from Homo sapiens (Human).